Here is a 220-residue protein sequence, read N- to C-terminus: UPF0502 protein VV2_0756 (220 aa).

The protein belongs to the UPF0502 family.

This Vibrio vulnificus (strain CMCP6) protein is UPF0502 protein VV2_0756.